A 364-amino-acid polypeptide reads, in one-letter code: DNA polymerase IV (364 aa).

Residues 14–198 (IIHIDMDAFF…LPIEKFHGVG (185 aa)) form the UmuC domain. Asp18 and Asp116 together coordinate Mg(2+). Glu117 is an active-site residue.

Belongs to the DNA polymerase type-Y family. As to quaternary structure, monomer. Requires Mg(2+) as cofactor.

Its subcellular location is the cytoplasm. It catalyses the reaction DNA(n) + a 2'-deoxyribonucleoside 5'-triphosphate = DNA(n+1) + diphosphate. In terms of biological role, poorly processive, error-prone DNA polymerase involved in untargeted mutagenesis. Copies undamaged DNA at stalled replication forks, which arise in vivo from mismatched or misaligned primer ends. These misaligned primers can be extended by PolIV. Exhibits no 3'-5' exonuclease (proofreading) activity. May be involved in translesional synthesis, in conjunction with the beta clamp from PolIII. In Streptococcus pyogenes serotype M1, this protein is DNA polymerase IV.